Consider the following 451-residue polypeptide: Tubulin alpha-2 chain (451 aa).

Residue Q11 participates in GTP binding. The residue at position 40 (K40) is an N6-acetyllysine. The GTP site is built by E71, S140, G144, T145, T179, N206, and N228. Mg(2+) is bound at residue E71. E254 is a catalytic residue. Residues 432-451 (YEEVGIDTADGEDDEEANDY) are disordered.

It belongs to the tubulin family. Dimer of alpha and beta chains. A typical microtubule is a hollow water-filled tube with an outer diameter of 25 nm and an inner diameter of 15 nM. Alpha-beta heterodimers associate head-to-tail to form protofilaments running lengthwise along the microtubule wall with the beta-tubulin subunit facing the microtubule plus end conferring a structural polarity. Microtubules usually have 13 protofilaments but different protofilament numbers can be found in some organisms and specialized cells. The cofactor is Mg(2+). In terms of processing, undergoes a tyrosination/detyrosination cycle, the cyclic removal and re-addition of a C-terminal tyrosine residue by the enzymes tubulin tyrosine carboxypeptidase (TTCP) and tubulin tyrosine ligase (TTL), respectively. Acetylation of alpha chains at Lys-40 stabilizes microtubules and affects affinity and processivity of microtubule motors. This modification has a role in multiple cellular functions, ranging from cell motility, cell cycle progression or cell differentiation to intracellular trafficking and signaling.

It is found in the cytoplasm. It localises to the cytoskeleton. The catalysed reaction is GTP + H2O = GDP + phosphate + H(+). Its function is as follows. Tubulin is the major constituent of microtubules, a cylinder consisting of laterally associated linear protofilaments composed of alpha- and beta-tubulin heterodimers. Microtubules grow by the addition of GTP-tubulin dimers to the microtubule end, where a stabilizing cap forms. Below the cap, tubulin dimers are in GDP-bound state, owing to GTPase activity of alpha-tubulin. The protein is Tubulin alpha-2 chain of Homarus americanus (American lobster).